The sequence spans 1473 residues: DNA topoisomerase 2 (1473 aa).

The interval 1–20 (MATKLPLQNSNAANVAKAPA) is disordered. A compositionally biased stretch (low complexity) spans 9-20 (NSNAANVAKAPA). ATP-binding positions include N91, N120, 148-150 (SSN), and 161-168 (GRNGYGAK). Residues 345–347 (NKK) form an interaction with DNA region. ATP is bound at residue 378–380 (QTK). Positions 455–569 (CTLILTEGDS…SLLQVPSFLV (115 aa)) constitute a Toprim domain. Mg(2+)-binding residues include E461, D538, and D540. Positions 704 to 1163 (IPSMVDGLKP…TPKSLWLSDL (460 aa)) constitute a Topo IIA-type catalytic domain. Residue Y794 is the O-(5'-phospho-DNA)-tyrosine intermediate of the active site. Positions 980–989 (KLTTTIATSN) are interaction with DNA. 3 disordered regions span residues 1195–1230 (SGAAVKVKRQAPKKPAPKKTTKKASESETTEASYSA), 1242–1297 (KPKA…EVEE), and 1313–1473 (GSAP…EDDE). 2 stretches are compositionally biased toward basic residues: residues 1200 to 1216 (KVKRQAPKKPAPKKTTK) and 1278 to 1288 (PKGRQGAKKKA). The segment covering 1351–1360 (KPAATKAAKP) has biased composition (low complexity). 2 stretches are compositionally biased toward polar residues: residues 1394-1404 (SPFNKKSSSVM) and 1417-1427 (ENVAGNSSSEK). Over residues 1453 to 1473 (SESESANDSEFDDIEDDEDDE) the composition is skewed to acidic residues.

The protein belongs to the type II topoisomerase family. In terms of assembly, homodimer. It depends on Mg(2+) as a cofactor. Mn(2+) is required as a cofactor. Requires Ca(2+) as cofactor.

The catalysed reaction is ATP-dependent breakage, passage and rejoining of double-stranded DNA.. In terms of biological role, control of topological states of DNA by transient breakage and subsequent rejoining of DNA strands. Topoisomerase II makes double-strand breaks. In Arabidopsis thaliana (Mouse-ear cress), this protein is DNA topoisomerase 2 (TOP2).